The sequence spans 571 residues: Proline--tRNA ligase (571 aa).

This sequence belongs to the class-II aminoacyl-tRNA synthetase family. ProS type 1 subfamily. In terms of assembly, homodimer.

The protein resides in the cytoplasm. It carries out the reaction tRNA(Pro) + L-proline + ATP = L-prolyl-tRNA(Pro) + AMP + diphosphate. Its function is as follows. Catalyzes the attachment of proline to tRNA(Pro) in a two-step reaction: proline is first activated by ATP to form Pro-AMP and then transferred to the acceptor end of tRNA(Pro). As ProRS can inadvertently accommodate and process non-cognate amino acids such as alanine and cysteine, to avoid such errors it has two additional distinct editing activities against alanine. One activity is designated as 'pretransfer' editing and involves the tRNA(Pro)-independent hydrolysis of activated Ala-AMP. The other activity is designated 'posttransfer' editing and involves deacylation of mischarged Ala-tRNA(Pro). The misacylated Cys-tRNA(Pro) is not edited by ProRS. The sequence is that of Proline--tRNA ligase from Thermodesulfovibrio yellowstonii (strain ATCC 51303 / DSM 11347 / YP87).